A 398-amino-acid chain; its full sequence is Signal-regulatory protein beta-1 (398 aa).

A signal peptide spans 1–29 (MPVPASWPHLPSPFLLMTLLLGRLTGVAG). Positions 30-136 (EDELQVIQPE…SPDDVEFKSG (107 aa)) constitute an Ig-like V-type domain. The Extracellular portion of the chain corresponds to 30–371 (EDELQVIQPE…EAALAPTAPL (342 aa)). 2 disulfide bridges follow: Cys-54-Cys-120 and Cys-169-Cys-227. Ig-like C1-type domains lie at 147–246 (PSAP…ANLS) and 253–347 (PTLE…YALE). Residues Asn-244, Asn-269, and Asn-291 are each glycosylated (N-linked (GlcNAc...) asparagine). Residues 372–392 (LVALLLGPKLLLVVGVSAIYI) traverse the membrane as a helical segment. At 393–398 (CWKQKA) the chain is on the cytoplasmic side.

As to quaternary structure, homodimer; disulfide-linked. Interacts with TYROBP. This interaction results in the recruitment of SYK. Post-translationally, N-glycosylated. Detected in monocytes and dendritic cells.

The protein localises to the cell membrane. Its function is as follows. Immunoglobulin-like cell surface receptor involved in the negative regulation of receptor tyrosine kinase-coupled signaling processes. Also participates in the recruitment of tyrosine kinase SYK. Triggers activation of myeloid cells when associated with TYROBP. The protein is Signal-regulatory protein beta-1 (SIRPB1) of Homo sapiens (Human).